A 207-amino-acid chain; its full sequence is MARCKS-related protein 1-B (207 aa).

2 stretches are compositionally biased toward low complexity: residues Met1–Lys25 and Ala63–Gly77. Residues Met1–Glu207 are disordered. Residue Gly2 is the site of N-myristoyl glycine attachment. The segment covering Glu78–Thr90 has biased composition (basic and acidic residues). The segment at Lys93 to Lys116 is effector domain involved in lipid-binding. Residues Leu100–Ile109 are compositionally biased toward low complexity. 2 stretches are compositionally biased toward basic and acidic residues: residues Thr131–Glu154 and Pro163–Ala182. Positions Glu195–Glu207 are enriched in polar residues.

It belongs to the MARCKS family. As to expression, strongly expressed in brain and eye. Also detected at lower levels in muscle.

The protein localises to the cytoplasm. Its subcellular location is the cytoskeleton. The protein resides in the cell membrane. Its function is as follows. Involved in the control of cell movement by regulating actin cytoskeleton homeostasis and filopodium and lamellipodium formation. The polypeptide is MARCKS-related protein 1-B (Danio rerio (Zebrafish)).